A 248-amino-acid chain; its full sequence is Oligo(A)/oligo(T)-binding protein (248 aa).

Residues M1–R36 mediate DNA binding. 2 disordered regions span residues M1–Q127 and T219–I248. Tandem repeats lie at residues G8 to G12, G14 to G18, and G26 to G30. The 3 X 5 AA repeats of G-R-K-P-G stretch occupies residues G8–G30. A compositionally biased stretch (basic residues) spans G12 to K21. Basic and acidic residues predominate over residues Q37 to T71. Low complexity-rich tracts occupy residues H72–S100 and Q111–Q127.

In terms of assembly, binds as a dimer or higher oligomer.

Its function is as follows. DNA-binding protein that recognizes oligo(A).oligo(T) tracts (A.T DNA). Can bind to any 11 bp sequence in which 10 bases conform to an uninterrupted oligo(A).oligo(T) tract. The polypeptide is Oligo(A)/oligo(T)-binding protein (DAT1) (Saccharomyces cerevisiae (strain ATCC 204508 / S288c) (Baker's yeast)).